The following is a 417-amino-acid chain: Probable secreted beta-glucosidase PSU1 (417 aa).

An N-terminal signal peptide occupies residues 1–18 (MRFFETLALALLTTGALA).

It belongs to the SUN family.

It localises to the secreted. The protein resides in the cell wall. Functionally, involved in cell wall synthesis. May be required for the activation of 1,3-beta-glucan synthase. This Schizosaccharomyces pombe (strain 972 / ATCC 24843) (Fission yeast) protein is Probable secreted beta-glucosidase PSU1 (psu1).